A 227-amino-acid chain; its full sequence is MSTAVTAMPDILDPMYWLGANGVFGSAVLPGILIIVFIETGLLFPLLPGESLLFTGGLLSASPAPPVTIGVLAPCVALVAVLGDQTAYFIGRRIGPALFKKEDSRFFKKHYVTESHAFFEKYGKWTIILARFVPIARTFVPVIAGVSYMRYPVFLGFDIVGGVAWGAGVTLAGYFLGSVPFVHMNFQLIILAIVFVSLLPALVSAARVYRARRNAPQSDPDPLVLPE.

5 consecutive transmembrane segments (helical) span residues 27–47 (AVLP…FPLL), 63–83 (PAPP…AVLG), 126–146 (TIIL…IAGV), 153–173 (VFLG…TLAG), and 186–206 (FQLI…VSAA).

Belongs to the DedA family.

The protein resides in the cell membrane. This is an uncharacterized protein from Mycobacterium tuberculosis (strain CDC 1551 / Oshkosh).